The primary structure comprises 410 residues: Arginine deiminase (410 aa).

Residue Cys399 is the Amidino-cysteine intermediate of the active site.

Belongs to the arginine deiminase family.

It is found in the cytoplasm. The enzyme catalyses L-arginine + H2O = L-citrulline + NH4(+). It functions in the pathway amino-acid degradation; L-arginine degradation via ADI pathway; carbamoyl phosphate from L-arginine: step 1/2. The chain is Arginine deiminase from Listeria monocytogenes serotype 4a (strain HCC23).